Reading from the N-terminus, the 453-residue chain is Bis(5'-adenosyl)-triphosphatase ENPP4 (453 aa).

The N-terminal stretch at 1-15 (MKLLVILLFSGLITG) is a signal peptide. Residues 16 to 407 (FRSDSSSSLP…DQWCINLPEA (392 aa)) are Extracellular-facing. Residues Asp-34 and Thr-70 each coordinate Zn(2+). Thr-70 serves as the catalytic AMP-threonine intermediate. Substrate-binding residues include Asn-91 and Tyr-154. Residues Asn-155 and Asn-166 are each glycosylated (N-linked (GlcNAc...) asparagine). Zn(2+) contacts are provided by Asp-189, His-193, Asp-237, and His-238. Asp-189 contacts substrate. Cysteines 254 and 287 form a disulfide. Asn-276 carries N-linked (GlcNAc...) asparagine glycosylation. Position 336 (His-336) interacts with Zn(2+). An N-linked (GlcNAc...) asparagine glycan is attached at Asn-386. A disulfide bond links Cys-394 and Cys-401. Residues 408–428 (IAIVIGSLLVLTMLTCLIIIM) form a helical membrane-spanning segment. Residues 429–453 (QNRLSVPRPFSRLQLQEDDDDPLIG) are Cytoplasmic-facing.

Belongs to the nucleotide pyrophosphatase/phosphodiesterase family. Zn(2+) is required as a cofactor. Expressed on the surface of vascular endothelia.

It is found in the cell membrane. It carries out the reaction P(1),P(3)-bis(5'-adenosyl) triphosphate + H2O = AMP + ADP + 2 H(+). Its function is as follows. Hydrolyzes extracellular Ap3A into AMP and ADP, and Ap4A into AMP and ATP. Ap3A and Ap4A are diadenosine polyphosphates thought to induce proliferation of vascular smooth muscle cells. Acts as a procoagulant, mediating platelet aggregation at the site of nascent thrombus via release of ADP from Ap3A and activation of ADP receptors. The polypeptide is Bis(5'-adenosyl)-triphosphatase ENPP4 (ENPP4) (Homo sapiens (Human)).